The primary structure comprises 337 residues: 2-oxoglutarate receptor 1 (337 aa).

Residues 1 to 34 (MNEPLDYLANASDFPDYAAAFGNCTDENIPLKMH) lie on the Extracellular side of the membrane. N-linked (GlcNAc...) asparagine glycosylation is found at N10 and N23. Residues 35-55 (YLPVIYGIIFLVGFPGNAVVI) form a helical membrane-spanning segment. At 56–69 (STYIFKMRPWKSST) the chain is on the cytoplasmic side. Residues 70 to 90 (IIMLNLACTDLLYLTSLPFLI) form a helical membrane-spanning segment. Residues 91–116 (HYYASGENWIFGDFMCKFIRFSFHFN) are Extracellular-facing. C106 and C183 are disulfide-bonded. The helical transmembrane segment at 117-137 (LYSSILFLTCFSIFRYCVIIH) threads the bilayer. At 138-151 (PMSCFSIHKTRCAV) the chain is on the cytoplasmic side. The chain crosses the membrane as a helical span at residues 152–172 (VACAVVWIISLVAVIPMTFLI). Topologically, residues 173–201 (TSTNRTNRSACLDLTSSDELNTIKWYNLI) are extracellular. Residues N176 and N179 are each glycosylated (N-linked (GlcNAc...) asparagine). The chain crosses the membrane as a helical span at residues 202-222 (LTATTFCLPLVIVTLCYTTII). Residues 223–242 (HTLTHGLQTDSCLKQKARRL) are Cytoplasmic-facing. Residues 243-263 (TILLLLAFYVCFLPFHILRVI) traverse the membrane as a helical segment. The Extracellular segment spans residues 264-284 (RIESRLLSISCSIENQIHEAY). The chain crosses the membrane as a helical span at residues 285-305 (IVSRPLAALNTFGNLLLYVVV). Topologically, residues 306-337 (SDNFQQAVCSTVRCKVSGNLEQAKKISYSNNP) are cytoplasmic.

This sequence belongs to the G-protein coupled receptor 1 family. Detected in kidney and, to a lower extent, in placenta. Not detected in brain tissues including the frontal cortex, caudate putamen, thalamus, hypothalamus, hippocampus or pons.

It is found in the cell membrane. G protein-coupled receptor for dicarboxylates and amino dicarboxylates. Receptor for itaconate, a metabolite produced by myeloid lineages. In the respiratory epithelium, couples the binding of itaconate to the activation of GNA11 and downstream intracellular Ca(2+) release, leading to mucocilliary clearance of airborne pathogens. Receptor for leukotriene E4 (LTE4) produced by mast cells upon allergic inflammation. Binds with high affinity to LTE4 and elicits mucin release from pulmonary epithelium in response to airborne fungi allergens. Regulates mucin-producing goblet cell homeostasis. Receptor for alpha-ketoglutarate produced by proximal tubule renal cells upon metabolic alkalosis. In an intrarenal paracrine signaling pathway, binds alpha-ketoglutarate and drives transepithelial salt reabsorption and bicarbonate secretion by SLC26A4/pendrin-positive intercalated cells. In Homo sapiens (Human), this protein is 2-oxoglutarate receptor 1 (OXGR1).